We begin with the raw amino-acid sequence, 53 residues long: MQEMVGYLIKYPNVLREVMEGNACLLGVDKDQSECIINGFKGLEIYSMLDWKY.

Positions 1-46 (MQEMVGYLIKYPNVLREVMEGNACLLGVDKDQSECIINGFKGLEIY) are excised as a propeptide. Residue tryptophan 51 is the site of 3'-geranyl-2',N2-cyclotryptophan attachment.

In terms of assembly, interacts directly with the sensor histidine kinase ComP and stimulates its activity. In terms of processing, trp-51 is modified by geranylation, which is essential for activity. Modified by the tryptophan prenyltransferase ComQ before export to the extracellular environment. The type of isoprenyl derivative differs among the different pherotypes and depends on ComX primary sequence.

It localises to the secreted. Functionally, part of a major quorum-sensing system that regulates the development of genetic competence. Acts through the activation of the two-component regulatory system ComP/ComA composed of a sensor histidine kinase, ComP, and a response regulator, ComA. This chain is ComX pheromone, found in Bacillus mojavensis.